A 175-amino-acid polypeptide reads, in one-letter code: ATP synthase subunit b (175 aa).

Residues 23–43 (TGITFLVLLFVLGKFAWGPIV) form a helical membrane-spanning segment.

It belongs to the ATPase B chain family. In terms of assembly, F-type ATPases have 2 components, F(1) - the catalytic core - and F(0) - the membrane proton channel. F(1) has five subunits: alpha(3), beta(3), gamma(1), delta(1), epsilon(1). F(0) has three main subunits: a(1), b(2) and c(10-14). The alpha and beta chains form an alternating ring which encloses part of the gamma chain. F(1) is attached to F(0) by a central stalk formed by the gamma and epsilon chains, while a peripheral stalk is formed by the delta and b chains.

The protein localises to the cell inner membrane. In terms of biological role, f(1)F(0) ATP synthase produces ATP from ADP in the presence of a proton or sodium gradient. F-type ATPases consist of two structural domains, F(1) containing the extramembraneous catalytic core and F(0) containing the membrane proton channel, linked together by a central stalk and a peripheral stalk. During catalysis, ATP synthesis in the catalytic domain of F(1) is coupled via a rotary mechanism of the central stalk subunits to proton translocation. Functionally, component of the F(0) channel, it forms part of the peripheral stalk, linking F(1) to F(0). This is ATP synthase subunit b from Anaeromyxobacter sp. (strain Fw109-5).